The sequence spans 693 residues: Elongation factor G (693 aa).

The tr-type G domain maps to glutamate 8–leucine 282. GTP-binding positions include alanine 17–threonine 24, aspartate 81–histidine 85, and asparagine 135–aspartate 138.

It belongs to the TRAFAC class translation factor GTPase superfamily. Classic translation factor GTPase family. EF-G/EF-2 subfamily.

The protein resides in the cytoplasm. Catalyzes the GTP-dependent ribosomal translocation step during translation elongation. During this step, the ribosome changes from the pre-translocational (PRE) to the post-translocational (POST) state as the newly formed A-site-bound peptidyl-tRNA and P-site-bound deacylated tRNA move to the P and E sites, respectively. Catalyzes the coordinated movement of the two tRNA molecules, the mRNA and conformational changes in the ribosome. The chain is Elongation factor G from Staphylococcus aureus (strain Mu3 / ATCC 700698).